The chain runs to 132 residues: Small ribosomal subunit protein uS8 (132 aa).

Belongs to the universal ribosomal protein uS8 family. In terms of assembly, part of the 30S ribosomal subunit. Contacts proteins S5 and S12.

One of the primary rRNA binding proteins, it binds directly to 16S rRNA central domain where it helps coordinate assembly of the platform of the 30S subunit. This is Small ribosomal subunit protein uS8 from Rubrobacter xylanophilus (strain DSM 9941 / JCM 11954 / NBRC 16129 / PRD-1).